An 85-amino-acid chain; its full sequence is F(1)-ATPase inhibitor IF(1), mitochondrial (85 aa).

The N-terminal 22 residues, 1–22 (MLPRSALARSLQLQRGVAARFY), are a transit peptide targeting the mitochondrion. The stretch at 41-84 (KRERATEDFFVRQREKEQLRHLKEQLEKQRKKIDSLENKIDSMT) forms a coiled coil.

Belongs to the ATPase inhibitor family. Monomer and homodimer. The protein aggregates less strongly with increasing pH.

The protein resides in the mitochondrion. Functionally, endogenous ATPase inhibitor, which inhibits specifically the reverse ATPase reaction of mitochondrial F(1)F(0)-type ATP synthase. It limits ATP depletion when the mitochondrial membrane potential falls below a threshold and the F(1)F(0)-ATP synthase starts hydrolyzing ATP to pump protons out of the mitochondrial matrix. Required to avoid the consumption of cellular ATP when the F(1)F(0)-ATP synthase enzyme acts as an ATP hydrolase. Functions through inserting its N-terminal part into the catalytically active F1-ATPase, thereby blocking its rotational movement and subsequently the ATP hydrolase activity. The chain is F(1)-ATPase inhibitor IF(1), mitochondrial (INH1) from Saccharomyces cerevisiae (strain ATCC 204508 / S288c) (Baker's yeast).